Reading from the N-terminus, the 278-residue chain is Biotin synthase (278 aa).

The 227-residue stretch at 1-227 folds into the Radical SAM core domain; the sequence is MQIMLCAISN…NAHIMVAGGR (227 aa). [4Fe-4S] cluster contacts are provided by C16, C20, and C23. Residues C60, C95, and C153 each coordinate [2Fe-2S] cluster.

Belongs to the radical SAM superfamily. Biotin synthase family. In terms of assembly, homodimer. Requires [4Fe-4S] cluster as cofactor. [2Fe-2S] cluster serves as cofactor.

The catalysed reaction is (4R,5S)-dethiobiotin + (sulfur carrier)-SH + 2 reduced [2Fe-2S]-[ferredoxin] + 2 S-adenosyl-L-methionine = (sulfur carrier)-H + biotin + 2 5'-deoxyadenosine + 2 L-methionine + 2 oxidized [2Fe-2S]-[ferredoxin]. Its pathway is cofactor biosynthesis; biotin biosynthesis; biotin from 7,8-diaminononanoate: step 2/2. Catalyzes the conversion of dethiobiotin (DTB) to biotin by the insertion of a sulfur atom into dethiobiotin via a radical-based mechanism. The polypeptide is Biotin synthase (Campylobacter lari (strain RM2100 / D67 / ATCC BAA-1060)).